A 183-amino-acid chain; its full sequence is Capsid protein (183 aa).

The tract at residues 143–183 (LPENAVVRRRGRSPRRRTPSPRRRRSQSPRRRRSQSRGSQC) is disordered. A compositionally biased stretch (basic residues) spans 149–177 (VRRRGRSPRRRTPSPRRRRSQSPRRRRSQ). Phosphoserine; by host occurs at positions 155, 162, and 170. Residues 155–161 (SPRRRTP) form a 1; half-length repeat. Residues 155–177 (SPRRRTPSPRRRRSQSPRRRRSQ) form a 3 X 8 AA repeats of S-P-R-R-R-[PR]-S-Q region. Residues 158-175 (RRTPSPRRRRSQSPRRRR) carry the Bipartite nuclear localization signal motif. Tandem repeats lie at residues 162–169 (SPRRRRSQ) and 170–177 (SPRRRRSQ). The segment at 177 to 183 (QSRGSQC) is RNA binding.

It belongs to the orthohepadnavirus core antigen family. In terms of assembly, homodimerizes, then multimerizes. Interacts with cytosol exposed regions of viral L glycoprotein present in the reticulum-to-Golgi compartment. Interacts with human FLNB. Phosphorylated form interacts with host importin alpha; this interaction depends on the exposure of the NLS, which itself depends upon genome maturation and/or phosphorylation of the capsid protein. Interacts with host NUP153. Post-translationally, phosphorylated by host SRPK1, SRPK2, and maybe protein kinase C or GAPDH. Phosphorylation is critical for pregenomic RNA packaging. Protein kinase C phosphorylation is stimulated by HBx protein and may play a role in transport of the viral genome to the nucleus at the late step during the viral replication cycle.

The protein resides in the virion. It is found in the host cytoplasm. Its function is as follows. Self assembles to form an icosahedral capsid. Most capsids appear to be large particles with an icosahedral symmetry of T=4 and consist of 240 copies of capsid protein, though a fraction forms smaller T=3 particles consisting of 180 capsid proteins. Entering capsids are transported along microtubules to the nucleus. Phosphorylation of the capsid is thought to induce exposure of nuclear localization signal in the C-terminal portion of the capsid protein that allows binding to the nuclear pore complex via the importin (karyopherin-) alpha and beta. Capsids are imported in intact form through the nuclear pore into the nuclear basket, where it probably binds NUP153. Only capsids that contain the mature viral genome can release the viral DNA and capsid protein into the nucleoplasm. Immature capsids get stuck in the basket. Capsids encapsulate the pre-genomic RNA and the P protein. Pre-genomic RNA is reverse-transcribed into DNA while the capsid is still in the cytoplasm. The capsid can then either be directed to the nucleus, providing more genomes for transcription, or bud through the endoplasmic reticulum to provide new virions. The chain is Capsid protein from Homo sapiens (Human).